Consider the following 165-residue polypeptide: Transcriptional repressor NrdR (165 aa).

Residues cysteine 3–cysteine 34 fold into a zinc finger. Positions valine 49–aspartate 139 constitute an ATP-cone domain.

The protein belongs to the NrdR family. It depends on Zn(2+) as a cofactor.

Functionally, negatively regulates transcription of bacterial ribonucleotide reductase nrd genes and operons by binding to NrdR-boxes. The polypeptide is Transcriptional repressor NrdR (Desulforapulum autotrophicum (strain ATCC 43914 / DSM 3382 / VKM B-1955 / HRM2) (Desulfobacterium autotrophicum)).